The chain runs to 266 residues: Manganese catalase (266 aa).

Glu35 is a Mn(2+) binding site. Ca(2+) is bound by residues Asp57 and Asp61. Mn(2+) contacts are provided by Glu66, His69, Glu148, and His181. Ca(2+) contacts are provided by Asn218, Ser220, and Gly222. The disordered stretch occupies residues 243–266; sequence ENPEAMGGIPHIKPGDPRLHNHQG. Over residues 255-266 the composition is skewed to basic and acidic residues; that stretch reads KPGDPRLHNHQG.

Belongs to the manganese catalase family. In terms of assembly, homohexamer. Ca(2+) is required as a cofactor. The cofactor is Mn(2+).

The catalysed reaction is 2 H2O2 = O2 + 2 H2O. Functionally, catalyzes the decomposition of hydrogen peroxide into water and oxygen. This chain is Manganese catalase, found in Lactiplantibacillus plantarum (Lactobacillus plantarum).